The chain runs to 204 residues: Pre-mRNA leakage protein 1 (204 aa).

An FHA domain is found at tyrosine 104 to isoleucine 172.

As to quaternary structure, belongs to the pre-mRNA retention and splicing (RES) complex composed of at least BUD13, IST3 and PML1.

The protein resides in the cytoplasm. It localises to the nucleus. Required for efficient splicing and pre-mRNA nuclear retention. The chain is Pre-mRNA leakage protein 1 (PML1) from Saccharomyces cerevisiae (strain ATCC 204508 / S288c) (Baker's yeast).